Reading from the N-terminus, the 130-residue chain is Cytochrome c-type biogenesis protein CcmE (130 aa).

The Cytoplasmic segment spans residues 1–7; the sequence is MKKKHKR. A helical; Signal-anchor for type II membrane protein transmembrane segment spans residues 8–28; sequence LLITSGIFCFLSCAVFFILTT. The Extracellular segment spans residues 29 to 130; that stretch reads LKENISFFYT…DENYKPKVLK (102 aa). The heme site is built by H120 and Y124.

The protein belongs to the CcmE/CycJ family.

Its subcellular location is the cell membrane. In terms of biological role, heme chaperone required for the biogenesis of c-type cytochromes. Transiently binds heme delivered by CcmC and transfers the heme to apo-cytochromes in a process facilitated by CcmF and CcmH. In Wolbachia pipientis subsp. Culex pipiens (strain wPip), this protein is Cytochrome c-type biogenesis protein CcmE.